The following is an 801-amino-acid chain: MGDTAVEPAPLKPASEPAPGPPGNNGGSLLSVITEGVGELSVIDPEVAQKACQEVLEKVRLLHGAVAVSKRGTALELVNGDGVDTEIRCLDDPPAQIREEEDEMGATVTSGTAKGARRRRQNNSAKQSWLLRLFESKLFDISMAISYLYNSKEPGVQAYIGNRLFCFRNEDVDFYLPQLLNMYIHMDEDVGDAIKPYIVHRCRQSINFSLQCALLLGAYSSDMHISTQRHSRGTKLRKLILSDELKPAHRKRELPSLSPALNTGLSPSKRTHQRSKSDATASISLSSSLKRTASNPKVENEDEPIRLAPEREFIKSLMAIGKRLATLPTKEQKTQRLISELSLLNHKLPARVWLPTAAFDHHVVRVPHTQAVVLNSKDKAPYLIYVEVLECENFDTTNVPARIPENRIRSTRSVENLPECGITHEQRAGSFSTVPNYDNDDEAWSVDDIGELQVELPEMHTNSCDNISQFSVDSITSQESKEPVFIAAGDIRRRLSEQLAHTPTAFRRDPEDPSAVALKEPWQEKVRRIREGSPYGHLPNWRLLSVIVKCGDDLRQELLAFQVLKQLQSIWEQERVPLWIKPYKILVISADSGMIEPVVNAVSIHQVKKQSQLSLLDYFLQEHGSYTTEAFLSAQRNFVQSCAGYCLVCYLLQVKDRHNGNILLDAEGHIIHIDFGFILSSSPRNLGFETSAFKLTTEFVDVMGGLDGDMFNYYKMLMLQGLIAARKHMDKVVQIVEIMQQGSQLPCFHGSSTIRNLKERFHMNMTEEQLQLLVEQMVDGSMRSITTKLYDGFQYLTNGIM.

3 disordered regions span residues 1-29 (MGDT…GGSL), 101-121 (EDEM…RRRQ), and 250-304 (RKRE…EDEP). N-acetylglycine is present on G2. The segment at 2 to 68 (GDTAVEPAPL…VRLLHGAVAV (67 aa)) is interaction with ACBD3. The region spanning 29–242 (LLSVITEGVG…GTKLRKLILS (214 aa)) is the PIK helical domain. At S258 the chain carries Phosphoserine. Residues 259-268 (PALNTGLSPS) show a composition bias toward polar residues. T263 bears the Phosphothreonine mark. Phosphoserine occurs at positions 266, 275, 277, 284, 294, and 413. The segment covering 278-294 (DATASISLSSSLKRTAS) has biased composition (low complexity). The residue at position 423 (T423) is a Phosphothreonine. S496 carries the post-translational modification Phosphoserine. Phosphothreonine occurs at positions 502 and 504. Residues 520 to 786 (EPWQEKVRRI…MVDGSMRSIT (267 aa)) form the PI3K/PI4K catalytic domain. The segment at 526 to 532 (VRRIREG) is G-loop. The interval 653 to 661 (QVKDRHNGN) is catalytic loop. The segment at 672-696 (HIDFGFILSSSPRNLGFETSAFKLT) is activation loop.

The protein belongs to the PI3/PI4-kinase family. Type III PI4K subfamily. In terms of assembly, interacts with ARF1 and ARF3 in the Golgi complex, but not with ARF4, ARF5 or ARF6. Interacts with NCS1/FREQ in a calcium-independent manner. Interacts with CALN1/CABP8 and CALN2/CABP7; in a calcium-dependent manner; this interaction competes with NCS1/FREQ binding. Interacts with ACBD3. Interacts with ARMH3, YWHAB, YWHAE, YWHAG, YWHAH, YWHAQ, YWHAZ and SFN. Interacts with GGA2 (via VHS domain); the interaction is important for PI4KB location at the Golgi apparatus membrane. Interacts with ATG9A. Mg(2+) is required as a cofactor. The cofactor is Mn(2+).

It is found in the endomembrane system. Its subcellular location is the mitochondrion outer membrane. The protein resides in the rough endoplasmic reticulum membrane. The protein localises to the golgi apparatus. It localises to the golgi apparatus membrane. It carries out the reaction a 1,2-diacyl-sn-glycero-3-phospho-(1D-myo-inositol) + ATP = a 1,2-diacyl-sn-glycero-3-phospho-(1D-myo-inositol 4-phosphate) + ADP + H(+). Inhibited by wortmannin. Increased kinase activity upon interaction with NCS1/FREQ. In terms of biological role, phosphorylates phosphatidylinositol (PI) in the first committed step in the production of the second messenger inositol-1,4,5,-trisphosphate (PIP). May regulate Golgi disintegration/reorganization during mitosis, possibly via its phosphorylation. Involved in Golgi-to-plasma membrane trafficking. May play an important role in the inner ear development. In Sorex araneus (Eurasian common shrew), this protein is Phosphatidylinositol 4-kinase beta (PI4KB).